The chain runs to 148 residues: Puroindoline-A (148 aa).

The N-terminal stretch at 1 to 19 is a signal peptide; it reads MKALFLIGLLALVASTAFA. Positions 20–28 are excised as a propeptide; that stretch reads QYSEVVGSY. The propeptide at 147–148 is removed in mature form; that stretch reads YW.

Post-translationally, five disulfide bonds are present. As to expression, endosperm and aleurone layer of developing kernels. In the aleurone layer, mainly localized to starch granules and the surface of the plasma membrane, forming a uniform layer, also abundant in the intercellular space. In the endosperm, mainly localized to starch granules and the plasma membrane, but less abundant in the intercellular space. Not found in roots or coleoptiles.

Its subcellular location is the membrane. It is found in the secreted. The protein resides in the extracellular space. Acts as a membranotoxin, probably through its antibacterial and antifungal activities, contributing to the defense mechanism of the plant against predators. Forms monovalent cation-selective ion channels in membranes. Has antibacterial activity against the Gram-positive bacteria S.aureus and C.michiganensis, and the Gram-negative bacteria E.coli, P.syringae pv phaseoli, A.tumefaciens and E.carotovora subsp carotovora. Acts synergistically with PINB against bacteria. Contributes to grain texture and hardness. The protein is Puroindoline-A (PINA) of Triticum aestivum (Wheat).